We begin with the raw amino-acid sequence, 587 residues long: MTSSIECQNFLRSLQLLNLLIKIGVQNLILCPGSRSAPLAIAAGELNKLGMVNIFNSIDERSAGFHSLGISAASGNLSLVITTSGTAVSNLLPAAVEADRSCKGVIFLTADRPLRLKDCGANQTVNQEDFLSSVCRSVLSTNLNGLHETQENEILNLVRITEKQISTFPGPIHLNIPIDKPLDISFLNKKNVLEVFKRIYLKKQYVFQKVEIKSDKNKFLEISKIFNLDESGIILVGPYQGSVNDLSSFNKSLEQLQEITGWPVFADPVSGVYSDLRGLVVNWELVLRKHKNLIKCKQLLRLGPMSSSIDLENFLIKFEGIQILIKEKNYRKLDPIKKSFEYDFGLLNFTSILLEELSFNEKNKKSLTPLALDLIEEGKQIKDILKDEIIIDNKITEYKLANLVPKLWPAEHPIMLSASSPIRDWLTFSENGTLTRNCFSFRGASGIDGTLSLALGISRIKNPLLLVTGDLAFVHDINGWLIENSVDMNLTILLIDNNGGNIFNRIYKKNLKEDEFKKLFLMPKEINWSKLSESYQVKFKSVSNFKKLREAFDWSISIQKSVIIKVDIDPENEIYEKNALLEKIIGS.

Belongs to the TPP enzyme family. MenD subfamily. As to quaternary structure, homodimer. Requires Mg(2+) as cofactor. Mn(2+) is required as a cofactor. It depends on thiamine diphosphate as a cofactor.

The enzyme catalyses isochorismate + 2-oxoglutarate + H(+) = 5-enolpyruvoyl-6-hydroxy-2-succinyl-cyclohex-3-ene-1-carboxylate + CO2. It functions in the pathway quinol/quinone metabolism; 1,4-dihydroxy-2-naphthoate biosynthesis; 1,4-dihydroxy-2-naphthoate from chorismate: step 2/7. The protein operates within cofactor biosynthesis; phylloquinone biosynthesis. In terms of biological role, catalyzes the thiamine diphosphate-dependent decarboxylation of 2-oxoglutarate and the subsequent addition of the resulting succinic semialdehyde-thiamine pyrophosphate anion to isochorismate to yield 2-succinyl-5-enolpyruvyl-6-hydroxy-3-cyclohexene-1-carboxylate (SEPHCHC). This chain is 2-succinyl-5-enolpyruvyl-6-hydroxy-3-cyclohexene-1-carboxylate synthase, found in Prochlorococcus marinus (strain MIT 9301).